The following is a 20-amino-acid chain: Putative 18 kDa spermidine-binding protein (20 aa).

Dimer of 18 kDa and 60 kDa subunit.

Its subcellular location is the microsome membrane. The protein resides in the endoplasmic reticulum membrane. In terms of biological role, may have spermidine-binding activity. The chain is Putative 18 kDa spermidine-binding protein from Zea mays (Maize).